Consider the following 442-residue polypeptide: DMATS-type prenyltransferase mfmD (442 aa).

It belongs to the tryptophan dimethylallyltransferase family.

It functions in the pathway secondary metabolite biosynthesis; terpenoid biosynthesis. In terms of biological role, prenyltransferase; part of the gene cluster that mediates the biosynthesis of the phthalide-terpenoid hybrid 11'-O-desmethylfendlerol. Within the pathway, mfmD is responsible for farnesylation of the cyclopolic acid intermediate via an O-prenylation reaction. The biosynthesis of 11'-O-desmethylfendlerol begins with the NR-PKS mfmB that forms 3,5-dimethylorsellinic acid (DMOA), which is then transformed into the phthalide 5,7-dihydroxy-4-(hydroxymethyl)-6-methylphthalide by the cytochrome P450 monooxygenase mfmA and the hydrolase mfmC. Subsequently, the methyltransferase mfmE catalyzes 7-O-methylation to yield 5-hydroxy-4-(hydroxymethyl)-7-methoxy-6-methylphthalide, which undergoes C-3 hydroxylation by the cytochrome P450 monooxygenase mfmF. The resultant cyclopolic acid (2,5-dihydroxy-4-(hydroxymethyl)-7-methoxy-6-methylphthalide) is then farnesylated by the DMATS-type prenyltransferase mfmD to afford 5-O-farnesylcyclopolic acid. Finally, the Pyr4-family terpene cyclase mfmH cyclizes the farnesyl moiety of 5-O-farnesylcyclopolic acid into a drimane-like structure, thus completing the biosynthesis of 11'-O-desmethylfendlerol. The polypeptide is DMATS-type prenyltransferase mfmD (Annulohypoxylon moriforme (Filamentous fungus)).